We begin with the raw amino-acid sequence, 942 residues long: MASALNSKIHPPGTCASSKADARGGSGWRMDCDPEMHVKMCKKIAQLTKVIYALNTRQDEVEVSVESIREAHQEDLQDTGAETRTRLPQEQSRTSEDAETLLKRIQTLENALELQKRLTQEALAESASCKLETKERELRVEAEHAERVLILSKEMLELKADYEKRLQLLTSHEGPQWGQLSQESPDATAESSQRPEMHQVLLEVERLRAENKQLSQDYARKAEELQATYERENEAIRQAMQQSVSEALWQWQEKESGLRKNFQVQESALQAQVRKLEGDLEHRGRKISDLKKYAQKLKERIQDLDVQLREARQENSELKSTARKLGEKLAIAKDRLMLQECHVTQKTDDMKTEDGVLGKRDDLEACSLHPQQEQGFPKLCHCRNGGSETQTKKEASGEMENMKQQYEEDLRKVRHQTEEEKQQLREQLGKRLEDLVKKHTMEMKSVCSTVEVERKKLKEVEAQLEEVKTKSEREIQQLQEEKAALSTKLQNSLLEDPCSRPKKPARDEGLEKLTDEEESSSDEEERTGESVKGKSDLQPPFESVMKEKAVEIGHRPEDWQSQRTKLQTQAAECLNKDSTDSLQAHLLELQALEDNARQELQEDCEQMQVQQSGLLESLRQELTEQRVACCEHQKALEMLQNEFRAVGPLGKWQATNQCPGDRRDHTFITEDMGVTGPPGSLPCAAEKGLLEENAQLQDTVLRLRAEVDQHLQEALQLREQHRLLEEDQKAQRAMEVEALRQEHRKEMQAMVADFSGAQARLQARLAALETELKESGEKAGKGTSRPEDLQLIGRLQTRLKEREDIIRQLTEERRFHYAAFPSAVSHRNRSFSFNPHPGYLTPSMKKKKMEEVPSRVVSVPNLASYAKNFLSGDLSSRINAPPITKSPSLDPSPSCSQPYKPTQLLDGKTASRTQDGEPAQPKEAPQKQGSPHQEWFTKYFSF.

2 disordered regions span residues 1–26 and 73–97; these read MASA…RGGS and QEDL…TSED. Coiled coils occupy residues 89-150, 196-337, and 387-495; these read QEQS…RVLI, EMHQ…DRLM, and SETQ…SLLE. The segment at 486–542 is disordered; that stretch reads STKLQNSLLEDPCSRPKKPARDEGLEKLTDEEESSSDEEERTGESVKGKSDLQPPFE. Residues 504–513 are compositionally biased toward basic and acidic residues; sequence PARDEGLEKL. Positions 514-526 are enriched in acidic residues; the sequence is TDEEESSSDEEER. 2 coiled-coil regions span residues 575–619 and 686–815; these read NKDS…ESLR and EKGL…ERRF. Residues 880 to 934 form a disordered region; that stretch reads APPITKSPSLDPSPSCSQPYKPTQLLDGKTASRTQDGEPAQPKEAPQKQGSPHQE. Residues 885 to 900 show a composition bias toward polar residues; sequence KSPSLDPSPSCSQPYK.

Belongs to the FAM184 family.

The protein is Protein FAM184B (Fam184b) of Mus musculus (Mouse).